A 1407-amino-acid chain; its full sequence is DNA-directed RNA polymerase subunit beta' (1407 aa).

Zn(2+) contacts are provided by cysteine 70, cysteine 72, cysteine 85, and cysteine 88. Mg(2+) is bound by residues aspartate 460, aspartate 462, and aspartate 464. Positions 814, 888, 895, and 898 each coordinate Zn(2+). At lysine 972 the chain carries N6-acetyllysine.

Belongs to the RNA polymerase beta' chain family. In terms of assembly, the RNAP catalytic core consists of 2 alpha, 1 beta, 1 beta' and 1 omega subunit. When a sigma factor is associated with the core the holoenzyme is formed, which can initiate transcription. Mg(2+) is required as a cofactor. The cofactor is Zn(2+).

The catalysed reaction is RNA(n) + a ribonucleoside 5'-triphosphate = RNA(n+1) + diphosphate. Functionally, DNA-dependent RNA polymerase catalyzes the transcription of DNA into RNA using the four ribonucleoside triphosphates as substrates. This chain is DNA-directed RNA polymerase subunit beta', found in Escherichia coli O1:K1 / APEC.